A 524-amino-acid polypeptide reads, in one-letter code: Probable cytosol aminopeptidase (524 aa).

Lys288 and Asp293 together coordinate Mn(2+). Lys300 is an active-site residue. Mn(2+)-binding residues include Asp311, Asp370, and Glu372. Arg374 is a catalytic residue.

It belongs to the peptidase M17 family. Mn(2+) serves as cofactor.

The protein resides in the cytoplasm. The enzyme catalyses Release of an N-terminal amino acid, Xaa-|-Yaa-, in which Xaa is preferably Leu, but may be other amino acids including Pro although not Arg or Lys, and Yaa may be Pro. Amino acid amides and methyl esters are also readily hydrolyzed, but rates on arylamides are exceedingly low.. It carries out the reaction Release of an N-terminal amino acid, preferentially leucine, but not glutamic or aspartic acids.. Functionally, presumably involved in the processing and regular turnover of intracellular proteins. Catalyzes the removal of unsubstituted N-terminal amino acids from various peptides. The chain is Probable cytosol aminopeptidase (pepA) from Mycobacterium leprae (strain TN).